Consider the following 274-residue polypeptide: HTH-type transcriptional regulator GadX (274 aa).

An HTH araC/xylS-type domain is found at 145-242 (TRVCTVINNN…GMTPTEYQER (98 aa)). 2 DNA-binding regions (H-T-H motif) span residues 162 to 183 (ARIASELLMSPSLLKKKLREEE) and 209 to 232 (IKRVAVSCGYHSVSYFIYVFRNYY).

Homodimer.

In terms of biological role, positively regulates the expression of about fifteen genes involved in acid resistance such as gadA, gadB and gadC. Depending on the conditions (growth phase and medium), can repress gadW. In Escherichia coli O157:H7, this protein is HTH-type transcriptional regulator GadX (gadX).